Reading from the N-terminus, the 285-residue chain is Aquaporin PIP2-5 (285 aa).

Transmembrane regions (helical) follow at residues 38–58 (AVIAEFVATLLFLYITVATVI) and 75–95 (CGGVGVLGIAWAFGGMIFILV). The short motif at 107–109 (NPA) is the NPA 1 element. 3 helical membrane passes run 126 to 146 (LLYIVAQCLGAICGVGLVKGF), 168 to 188 (GTGLAAEIIGTFVLVYTVFSA), and 202 to 222 (VLAPLPIGFAVFMVHLATIPI). The NPA 2 motif lies at 228-230 (NPA). Residues 250 to 270 (IFWVGPFIGAAIAAAYHQYVL) form a helical membrane-spanning segment.

It belongs to the MIP/aquaporin (TC 1.A.8) family. PIP (TC 1.A.8.11) subfamily. In terms of assembly, homomers. May interact with PIP1-2 to form heteromers. Specifically expressed in roots, in the exodermis, endodermis and xylem parenchyma. Polar localization to the external periclinal side of epidermal cells in root apices.

It is found in the cell membrane. Functionally, water channel required to facilitate the transport of water across cell membrane. Its function is impaired by Hg(2+). May play a role in water uptake from the root surface. Active as homomers. Increased activity when heteromerization with PIP1-2. The polypeptide is Aquaporin PIP2-5 (PIP2-5) (Zea mays (Maize)).